The chain runs to 556 residues: Membrane protein insertase YidC (556 aa).

Residues 5–25 (TLTAIVLSFVLLTAFQFYMAW) traverse the membrane as a helical segment. The tract at residues 36 to 74 (QVQSGESSAPAPLASTAPVADALPPPVEGMAGSAPQQAM) is disordered. Residues 42–55 (SSAPAPLASTAPVA) show a composition bias toward low complexity. Helical transmembrane passes span 370 to 390 (NYGV…FPLA), 441 to 461 (LPIL…FLSV), 468 to 488 (FMLW…PLLM), and 510 to 530 (IMMF…SGLV).

Belongs to the OXA1/ALB3/YidC family. Type 1 subfamily. As to quaternary structure, interacts with the Sec translocase complex via SecD. Specifically interacts with transmembrane segments of nascent integral membrane proteins during membrane integration.

It localises to the cell inner membrane. Required for the insertion and/or proper folding and/or complex formation of integral membrane proteins into the membrane. Involved in integration of membrane proteins that insert both dependently and independently of the Sec translocase complex, as well as at least some lipoproteins. Aids folding of multispanning membrane proteins. This is Membrane protein insertase YidC from Magnetococcus marinus (strain ATCC BAA-1437 / JCM 17883 / MC-1).